Consider the following 164-residue polypeptide: uncharacterized protein (164 aa).

Residues 26–158 (YAGFWVRFWA…DYIADTTVVH (133 aa)) enclose the RDD domain. Helical transmembrane passes span 35 to 55 (AFLLDWLVIWGLNHLLVSPLF) and 66 to 86 (MFTFSAYSVTTLIVYLAYFAL).

It is found in the cell membrane. This is an uncharacterized protein from Bacillus subtilis (strain 168).